The following is a 476-amino-acid chain: tRNA-2-methylthio-N(6)-dimethylallyladenosine synthase (476 aa).

The 118-residue stretch at 5 to 122 (KKLYIKTWGC…LPEMINQVKG (118 aa)) folds into the MTTase N-terminal domain. Positions 14, 51, 85, 159, 163, and 166 each coordinate [4Fe-4S] cluster. Positions 145 to 377 (RAEGPSAFVS…QQRINQQAMS (233 aa)) constitute a Radical SAM core domain. In terms of domain architecture, TRAM spans 380–443 (RAMLGSVQRI…ANSLRGKVIR (64 aa)).

This sequence belongs to the methylthiotransferase family. MiaB subfamily. In terms of assembly, monomer. [4Fe-4S] cluster is required as a cofactor.

The protein localises to the cytoplasm. It carries out the reaction N(6)-dimethylallyladenosine(37) in tRNA + (sulfur carrier)-SH + AH2 + 2 S-adenosyl-L-methionine = 2-methylsulfanyl-N(6)-dimethylallyladenosine(37) in tRNA + (sulfur carrier)-H + 5'-deoxyadenosine + L-methionine + A + S-adenosyl-L-homocysteine + 2 H(+). In terms of biological role, catalyzes the methylthiolation of N6-(dimethylallyl)adenosine (i(6)A), leading to the formation of 2-methylthio-N6-(dimethylallyl)adenosine (ms(2)i(6)A) at position 37 in tRNAs that read codons beginning with uridine. The protein is tRNA-2-methylthio-N(6)-dimethylallyladenosine synthase of Photorhabdus laumondii subsp. laumondii (strain DSM 15139 / CIP 105565 / TT01) (Photorhabdus luminescens subsp. laumondii).